The following is a 233-amino-acid chain: Ribonuclease 3 (233 aa).

The RNase III domain occupies K7–G136. E49 serves as a coordination point for Mg(2+). D53 is an active-site residue. Positions 122 and 125 each coordinate Mg(2+). E125 is an active-site residue. The 71-residue stretch at D162 to E232 folds into the DRBM domain.

This sequence belongs to the ribonuclease III family. In terms of assembly, homodimer. The cofactor is Mg(2+).

The protein resides in the cytoplasm. It catalyses the reaction Endonucleolytic cleavage to 5'-phosphomonoester.. In terms of biological role, digests double-stranded RNA. Involved in the processing of primary rRNA transcript to yield the immediate precursors to the large and small rRNAs (23S and 16S). Processes some mRNAs, and tRNAs when they are encoded in the rRNA operon. Processes pre-crRNA and tracrRNA of type II CRISPR loci if present in the organism. The polypeptide is Ribonuclease 3 (Leuconostoc citreum (strain KM20)).